Consider the following 1342-residue polypeptide: Subtilisin-like protease 2 (1342 aa).

An N-terminal signal peptide occupies residues 1–18; sequence MLNIIYVVSLILIKFIFY. Positions 19 to 687 are cleaved as a propeptide — inhibition peptide; sequence KECNNNNNYY…KLYNNKYSFL (669 aa). 2 disordered regions span residues 85–111 and 143–171; these read EKKT…ENEI and ADVS…NYKN. Residues Asn165, Asn343, Asn451, Asn455, and Asn493 are each glycosylated (N-linked (GlcNAc...) asparagine). The tract at residues 415–474 is disordered; the sequence is KKSKKEKENTQQKGGNNPNVDINILNNNNNNNNNNNNNSNNNSNSMNDEEINYNNNNNKE. Positions 430 to 474 are enriched in low complexity; sequence NNPNVDINILNNNNNNNNNNNNNSNNNSNSMNDEEINYNNNNNKE. The disordered stretch occupies residues 500 to 531; that stretch reads IYHNKNDNSYKNKKEGTGKNNDNNDPNNNNNK. A compositionally biased stretch (basic and acidic residues) spans 503–516; the sequence is NKNDNSYKNKKEGT. Residues 518–531 show a composition bias toward low complexity; that stretch reads KNNDNNDPNNNNNK. N-linked (GlcNAc...) asparagine glycosylation is found at Asn551, Asn642, and Asn729. Residues 688 to 1137 are Extracellular-facing; it reads NKFLNIEPLI…LYNLYEYDSH (450 aa). The Peptidase S8 domain occupies 727–1020; sequence TWNLSIIRVF…DSLVNAEGAV (294 aa). Catalysis depends on charge relay system residues Asp755 and His798. Asn821, Asn857, Asn893, and Asn951 each carry an N-linked (GlcNAc...) asparagine glycan. Ser961 functions as the Charge relay system in the catalytic mechanism. N-linked (GlcNAc...) asparagine glycosylation is found at Asn1010 and Asn1106. A helical membrane pass occupies residues 1138-1158; sequence YLLASVILFFLALLSIFVGMI. Over 1159–1342 the chain is Cytoplasmic; that stretch reads YMKSRKHSDK…MNQLDDMFMK (184 aa).

The protein belongs to the peptidase S8 family. In terms of processing, proteolytically cleaved at the N-terminus to generate a 74kDa intermediate which is further processed into a 72kDa form. The first maturation cleavage is autocatalytic, occurs in the ER and is necessary for the subsequent SUB2 trafficking to the microneme. The second cleavage may be mediated by PMX/plasmepsin X.

Its subcellular location is the cell membrane. The protein localises to the cytoplasmic vesicle. The protein resides in the secretory vesicle. It localises to the microneme membrane. The catalysed reaction is Hydrolysis of proteins with broad specificity for peptide bonds, and a preference for a large uncharged residue in P1. Hydrolyzes peptide amides.. Its activity is regulated as follows. Activation may be calcium-dependent. Inhibited by the non-covalent interaction with the cleaved propeptide. In terms of biological role, serine protease which plays an essential role in the shedding of AMA1, MSP1 and MSP7 from the surface of the invading merozoite; this step is essential for productive invasion and the release of the adhesion between the erythrocyte and the merozoite. May cleave TRAMP/PTTRAMP, thereby shedding TRAMP from the merozoite surface during erythrocyte invasion. This chain is Subtilisin-like protease 2, found in Plasmodium falciparum.